The primary structure comprises 219 residues: MTQDEMKKAAGWAALKYVEKDSIVGVGTGSTVNHFIDALATMKADIEGAVSSSEASTQKMKALGIPVYDLNSVDKLSVYVDGADEINGHMDMIKGGGAALTREKIVAAVAEKFVCIVDNTKQVDILGEFPLPVEVIPMARSYVARELVKLGGDPVYREGVVTDNGNVILDVYNLKIINPKELEEKINAIVGVVTNGLFAKRGADVLLVGTPEGVKTFTA.

Substrate-binding positions include Thr-28–Thr-31, Asp-81–Asp-84, and Lys-94–Gly-97. Catalysis depends on Glu-103, which acts as the Proton acceptor. Residue Lys-121 participates in substrate binding.

The protein belongs to the ribose 5-phosphate isomerase family. As to quaternary structure, homodimer.

The catalysed reaction is aldehydo-D-ribose 5-phosphate = D-ribulose 5-phosphate. Its pathway is carbohydrate degradation; pentose phosphate pathway; D-ribose 5-phosphate from D-ribulose 5-phosphate (non-oxidative stage): step 1/1. Functionally, catalyzes the reversible conversion of ribose-5-phosphate to ribulose 5-phosphate. The protein is Ribose-5-phosphate isomerase A of Shewanella sp. (strain MR-4).